The following is a 1006-amino-acid chain: Zinc finger protein ZFPM1 (1006 aa).

Over residues 1–13 (MSRRKQSNPRQIK) the composition is skewed to basic residues. Disordered stretches follow at residues 1–93 (MSRR…DELE) and 114–133 (SWGP…RQAE). Positions 15 to 25 (SLGDMEAREEV) are enriched in basic and acidic residues. Residues 42-62 (APSPPSADVNSPPPLPPPTSP) show a composition bias toward pro residues. Residues 66–79 (KELEGQEPEPRPTE) show a composition bias toward basic and acidic residues. Phosphoserine is present on residues S84 and S128. The segment covering 121-130 (SVQTRASSPR) has biased composition (polar residues). The segment at 235–268 (VINKDVFPCKDCGIWYRSERNLQAHLLYYCASRQ) adopts a CCHC FOG-type 1 zinc-finger fold. Zn(2+) is bound by residues C243, C246, H259, and C264. S272 is modified (phosphoserine). C2H2-type zinc fingers lie at residues 290-314 (RVCP…MRSH), 320-342 (FVCL…LKVH), and 348-371 (GVCH…VTNH). The segment at 330 to 341 (TTKANCERHLKV) is interaction with TACC3. S384 is modified (phosphoserine). Disordered stretches follow at residues 384–409 (SPGA…HTAL), 438–460 (NGEA…AAPR), and 473–515 (APIL…SPVP). The span at 485–515 (APSRTPSPRSPAPARVKAELSSPTPGSSPVP) shows a compositional bias: low complexity. 2 positions are modified to phosphoserine: S491 and S494. A CCHC FOG-type 2 zinc finger spans residues 571 to 604 (PGAPKGATCFECEITFSNVNNYYVHKRLYCSGRR). Residues C579, C582, H595, and C600 each coordinate Zn(2+). The tract at residues 605–681 (APEDAPAARR…SVDDAEDDPS (77 aa)) is disordered. A compositionally biased stretch (pro residues) spans 617-629 (APPGPARAPPGQP). A phosphoserine mark is found at S638 and S671. A CCHC FOG-type 3 zinc finger spans residues 677–710 (EDDPSRTLCEACNIRFSRHETYTVHKRYYCASRH). Residues C685, C688, H701, and C706 each coordinate Zn(2+). A disordered region spans residues 708–810 (SRHDPPPRRP…PRRPLPGAPA (103 aa)). 2 stretches are compositionally biased toward pro residues: residues 715–735 (RRPA…PSPA) and 754–769 (APPP…PESP). Residues 780 to 791 (GLAPARSPGPAA) show a composition bias toward low complexity. S786 carries the post-translational modification Phosphoserine. The tract at residues 794-800 (PIDLSKK) is interaction with CTBP2. The CCHC FOG-type 4 zinc finger occupies 811-844 (PALADYHECTACRVSFHSLEAYLAHKKYSCPAAP). C819, C822, H835, and C840 together coordinate Zn(2+). The C2H2-type 4 zinc-finger motif lies at 854 to 877 (AACPYCPPNGPVRGDLLEHFRLAH). Positions 889–971 (GVEARTPADR…KGTPAPLPNG (83 aa)) are disordered. 4 positions are modified to phosphoserine: S901, S909, S914, and S935. Positions 925–950 (PQEPPPGPPPSPAAAPEAVPPPPAPP) are enriched in pro residues. The CCHC FOG-type 5 zinc-finger motif lies at 968–1001 (LPNGNHRYCRLCNIKFSSLSTFIAHKKYYCSSHA). Zn(2+) contacts are provided by C976, C979, H992, and C997.

It belongs to the FOG (Friend of GATA) family. Interacts with corepressor CTBP2; this interaction is however not essential for corepressor activity. Interacts with the N-terminal zinc-finger of GATA1, GATA2 and probably GATA3. As to expression, mainly expressed in hematopoietic tissues. Also expressed in adult cerebellum, stomach, lymph node, liver and pancreas. Expressed in fetal heart, liver and spleen.

The protein localises to the nucleus. Its function is as follows. Transcription regulator that plays an essential role in erythroid and megakaryocytic cell differentiation. Essential cofactor that acts via the formation of a heterodimer with transcription factors of the GATA family GATA1, GATA2 and GATA3. Such heterodimer can both activate or repress transcriptional activity, depending on the cell and promoter context. The heterodimer formed with GATA proteins is essential to activate expression of genes such as NFE2, ITGA2B, alpha- and beta-globin, while it represses expression of KLF1. May be involved in regulation of some genes in gonads. May also be involved in cardiac development, in a non-redundant way with ZFPM2/FOG2. This is Zinc finger protein ZFPM1 (ZFPM1) from Homo sapiens (Human).